Reading from the N-terminus, the 139-residue chain is Gene 22 protein (139 aa).

The protein is Gene 22 protein (22) of Mycobacterium phage D29 (Mycobacteriophage D29).